A 350-amino-acid chain; its full sequence is ATP-dependent (S)-NAD(P)H-hydrate dehydratase (350 aa).

The region spanning 35–342 (LMQSVKRIIP…PEVGRAYEEL (308 aa)) is the YjeF C-terminal domain. Residues Gly139 and 192 to 198 (NVAEFGR) each bind (6S)-NADPHX. ATP contacts are provided by residues 230-234 (KGPVD) and 249-258 (GGLKRCGGQG). Position 259 (Asp259) interacts with (6S)-NADPHX.

The protein belongs to the NnrD/CARKD family. The cofactor is Mg(2+).

It localises to the cytoplasm. The enzyme catalyses (6S)-NADHX + ATP = ADP + phosphate + NADH + H(+). It carries out the reaction (6S)-NADPHX + ATP = ADP + phosphate + NADPH + H(+). Its function is as follows. Catalyzes the dehydration of the S-form of NAD(P)HX at the expense of ATP, which is converted to ADP. Together with NAD(P)HX epimerase, which catalyzes the epimerization of the S- and R-forms, the enzyme allows the repair of both epimers of NAD(P)HX, a damaged form of NAD(P)H that is a result of enzymatic or heat-dependent hydration. The protein is ATP-dependent (S)-NAD(P)H-hydrate dehydratase of Mycosarcoma maydis (Corn smut fungus).